A 382-amino-acid chain; its full sequence is V-type proton ATPase subunit C 1 (382 aa).

N-acetylthreonine is present on Thr-2.

It belongs to the V-ATPase C subunit family. V-ATPase is a heteromultimeric enzyme made up of two complexes: the ATP-hydrolytic V1 complex and the proton translocation V0 complex. The V1 complex consists of three catalytic AB heterodimers that form a heterohexamer, three peripheral stalks each consisting of EG heterodimers, one central rotor including subunits D and F, and the regulatory subunits C and H. The proton translocation complex V0 consists of the proton transport subunit a, a ring of proteolipid subunits c9c'', rotary subunit d, subunits e and f, and the accessory subunits ATP6AP1/Ac45 and ATP6AP2/PRR. Expressed in brain (at protein level).

Its subcellular location is the cytoplasmic vesicle. The protein resides in the secretory vesicle. The protein localises to the synaptic vesicle membrane. It localises to the clathrin-coated vesicle membrane. Subunit of the V1 complex of vacuolar(H+)-ATPase (V-ATPase), a multisubunit enzyme composed of a peripheral complex (V1) that hydrolyzes ATP and a membrane integral complex (V0) that translocates protons. V-ATPase is responsible for acidifying and maintaining the pH of intracellular compartments and in some cell types, is targeted to the plasma membrane, where it is responsible for acidifying the extracellular environment. Subunit C is necessary for the assembly of the catalytic sector of the enzyme and is likely to have a specific function in its catalytic activity. In Rattus norvegicus (Rat), this protein is V-type proton ATPase subunit C 1 (Atp6v1c1).